We begin with the raw amino-acid sequence, 195 residues long: MDINKLINMFAKLPNFGPSSSRRIVLHLLRNKEEVMLPLASGIQDLAFQTKECSVCFNIDVKSPCSICSDTKRDHQLLCIVEELGDLWAFEKGKIYQGVYHVLGGTLSAIYGIGPDQLNLDNIVERIKKFDIKEVIIGIGNTMDGQVTTHYITQIVKGLGIKITRLACGIPMGGEIDYLDEGTLSAALSSRYVIS.

A C4-type zinc finger spans residues 53–68; it reads CSVCFNIDVKSPCSIC. In terms of domain architecture, Toprim spans 76 to 171; the sequence is QLLCIVEELG…KITRLACGIP (96 aa).

Belongs to the RecR family.

May play a role in DNA repair. It seems to be involved in an RecBC-independent recombinational process of DNA repair. It may act with RecF and RecO. The protein is Recombination protein RecR of Ehrlichia canis (strain Jake).